The chain runs to 203 residues: Ribosomal RNA large subunit methyltransferase E (203 aa).

S-adenosyl-L-methionine contacts are provided by Gly51, Trp53, Asp69, Asp85, and Asp108. The active-site Proton acceptor is the Lys148.

This sequence belongs to the class I-like SAM-binding methyltransferase superfamily. RNA methyltransferase RlmE family.

It is found in the cytoplasm. The enzyme catalyses uridine(2552) in 23S rRNA + S-adenosyl-L-methionine = 2'-O-methyluridine(2552) in 23S rRNA + S-adenosyl-L-homocysteine + H(+). Its function is as follows. Specifically methylates the uridine in position 2552 of 23S rRNA at the 2'-O position of the ribose in the fully assembled 50S ribosomal subunit. The protein is Ribosomal RNA large subunit methyltransferase E of Methanocorpusculum labreanum (strain ATCC 43576 / DSM 4855 / Z).